A 173-amino-acid polypeptide reads, in one-letter code: Bifunctional protein PyrR (173 aa).

Residues threonine 40–arginine 41, aspartate 97–threonine 105, and arginine 130 contribute to the substrate site. The PRPP-binding signature appears at valine 93–threonine 105.

Belongs to the purine/pyrimidine phosphoribosyltransferase family. PyrR subfamily. In terms of assembly, homodimer and homohexamer; in equilibrium.

The catalysed reaction is UMP + diphosphate = 5-phospho-alpha-D-ribose 1-diphosphate + uracil. In terms of biological role, regulates transcriptional attenuation of the pyrimidine nucleotide (pyr) operon by binding in a uridine-dependent manner to specific sites on pyr mRNA. This disrupts an antiterminator hairpin in the RNA and favors formation of a downstream transcription terminator, leading to a reduced expression of downstream genes. Its function is as follows. Also displays a weak uracil phosphoribosyltransferase activity which is not physiologically significant. In Streptococcus pyogenes serotype M6 (strain ATCC BAA-946 / MGAS10394), this protein is Bifunctional protein PyrR.